Consider the following 116-residue polypeptide: S-adenosylmethionine decarboxylase proenzyme (116 aa).

Ser-63 serves as the catalytic Schiff-base intermediate with substrate; via pyruvic acid. Ser-63 carries the pyruvic acid (Ser); by autocatalysis modification. Residue His-68 is the Proton acceptor; for processing activity of the active site. Cys-83 (proton donor; for catalytic activity) is an active-site residue.

Belongs to the prokaryotic AdoMetDC family. Type 1 subfamily. As to quaternary structure, heterotetramer of two alpha and two beta chains arranged as a dimer of alpha/beta heterodimers. Pyruvate is required as a cofactor. In terms of processing, is synthesized initially as an inactive proenzyme. Formation of the active enzyme involves a self-maturation process in which the active site pyruvoyl group is generated from an internal serine residue via an autocatalytic post-translational modification. Two non-identical subunits are generated from the proenzyme in this reaction, and the pyruvate is formed at the N-terminus of the alpha chain, which is derived from the carboxyl end of the proenzyme. The post-translation cleavage follows an unusual pathway, termed non-hydrolytic serinolysis, in which the side chain hydroxyl group of the serine supplies its oxygen atom to form the C-terminus of the beta chain, while the remainder of the serine residue undergoes an oxidative deamination to produce ammonia and the pyruvoyl group blocking the N-terminus of the alpha chain.

It catalyses the reaction S-adenosyl-L-methionine + H(+) = S-adenosyl 3-(methylsulfanyl)propylamine + CO2. It functions in the pathway amine and polyamine biosynthesis; S-adenosylmethioninamine biosynthesis; S-adenosylmethioninamine from S-adenosyl-L-methionine: step 1/1. Catalyzes the decarboxylation of S-adenosylmethionine to S-adenosylmethioninamine (dcAdoMet), the propylamine donor required for the synthesis of the polyamines spermine and spermidine from the diamine putrescine. The sequence is that of S-adenosylmethionine decarboxylase proenzyme from Clostridium botulinum (strain 657 / Type Ba4).